A 354-amino-acid polypeptide reads, in one-letter code: RNA 3'-terminal phosphate cyclase (354 aa).

ATP is bound by residues Q100 and 290–293 (HMGD). H316 acts as the Tele-AMP-histidine intermediate in catalysis.

It belongs to the RNA 3'-terminal cyclase family. Type 1 subfamily.

It localises to the cytoplasm. The enzyme catalyses a 3'-end 3'-phospho-ribonucleotide-RNA + ATP = a 3'-end 2',3'-cyclophospho-ribonucleotide-RNA + AMP + diphosphate. Functionally, catalyzes the conversion of 3'-phosphate to a 2',3'-cyclic phosphodiester at the end of RNA. The mechanism of action of the enzyme occurs in 3 steps: (A) adenylation of the enzyme by ATP; (B) transfer of adenylate to an RNA-N3'P to produce RNA-N3'PP5'A; (C) and attack of the adjacent 2'-hydroxyl on the 3'-phosphorus in the diester linkage to produce the cyclic end product. The biological role of this enzyme is unknown but it is likely to function in some aspects of cellular RNA processing. The polypeptide is RNA 3'-terminal phosphate cyclase (Caldivirga maquilingensis (strain ATCC 700844 / DSM 13496 / JCM 10307 / IC-167)).